The following is a 78-amino-acid chain: D-alanyl carrier protein (78 aa).

A Carrier domain is found at 1-78; it reads MEFKEQVLDL…KIVEALEELR (78 aa). Ser36 is modified (O-(pantetheine 4'-phosphoryl)serine).

The protein belongs to the DltC family. Post-translationally, 4'-phosphopantetheine is transferred from CoA to a specific serine of apo-DCP.

The protein localises to the cytoplasm. The protein operates within cell wall biogenesis; lipoteichoic acid biosynthesis. Carrier protein involved in the D-alanylation of lipoteichoic acid (LTA). The loading of thioester-linked D-alanine onto DltC is catalyzed by D-alanine--D-alanyl carrier protein ligase DltA. The DltC-carried D-alanyl group is further transferred to cell membrane phosphatidylglycerol (PG) by forming an ester bond, probably catalyzed by DltD. D-alanylation of LTA plays an important role in modulating the properties of the cell wall in Gram-positive bacteria, influencing the net charge of the cell wall. This Staphylococcus haemolyticus (strain JCSC1435) protein is D-alanyl carrier protein.